A 750-amino-acid polypeptide reads, in one-letter code: 5-methyltetrahydropteroyltriglutamate--homocysteine methyltransferase (750 aa).

5-methyltetrahydropteroyltri-L-glutamate-binding positions include 15 to 18 and K114; that span reads RELK. L-homocysteine is bound by residues 425–427 and E478; that span reads IGS. Residues 425–427 and E478 each bind L-methionine; that span reads IGS. W555 contacts 5-methyltetrahydropteroyltri-L-glutamate. D593 contacts L-homocysteine. Position 593 (D593) interacts with L-methionine. E599 serves as a coordination point for 5-methyltetrahydropteroyltri-L-glutamate. Residues H636, C638, and E660 each coordinate Zn(2+). H689 functions as the Proton donor in the catalytic mechanism. C721 provides a ligand contact to Zn(2+).

Belongs to the vitamin-B12 independent methionine synthase family. Zn(2+) is required as a cofactor.

The catalysed reaction is 5-methyltetrahydropteroyltri-L-glutamate + L-homocysteine = tetrahydropteroyltri-L-glutamate + L-methionine. The protein operates within amino-acid biosynthesis; L-methionine biosynthesis via de novo pathway; L-methionine from L-homocysteine (MetE route): step 1/1. In terms of biological role, catalyzes the transfer of a methyl group from 5-methyltetrahydrofolate to homocysteine resulting in methionine formation. This chain is 5-methyltetrahydropteroyltriglutamate--homocysteine methyltransferase, found in Streptococcus sanguinis (strain SK36).